Here is a 466-residue protein sequence, read N- to C-terminus: Asparagine--tRNA ligase (466 aa).

It belongs to the class-II aminoacyl-tRNA synthetase family. In terms of assembly, homodimer.

Its subcellular location is the cytoplasm. The enzyme catalyses tRNA(Asn) + L-asparagine + ATP = L-asparaginyl-tRNA(Asn) + AMP + diphosphate + H(+). The polypeptide is Asparagine--tRNA ligase (Serratia proteamaculans (strain 568)).